The following is a 392-amino-acid chain: Galactokinase (392 aa).

4 residues coordinate alpha-D-galactose: Arg37, Glu43, His44, and Asp46. ATP contacts are provided by Gly136, Gly138, Ser140, and Ser141. Position 186 (Asp186) interacts with alpha-D-galactose. The active-site Proton acceptor is the Asp186. A Phosphoserine modification is found at Ser230. Tyr236 serves as a coordination point for alpha-D-galactose.

This sequence belongs to the GHMP kinase family. GalK subfamily. In terms of assembly, homodimer.

It carries out the reaction alpha-D-galactose + ATP = alpha-D-galactose 1-phosphate + ADP + H(+). The protein operates within carbohydrate metabolism; galactose metabolism. In terms of biological role, catalyzes the transfer of a phosphate from ATP to alpha-D-galactose and participates in the first committed step in the catabolism of galactose. The sequence is that of Galactokinase (GALK1) from Canis lupus familiaris (Dog).